A 308-amino-acid chain; its full sequence is Porphobilinogen deaminase (308 aa).

Cys-243 carries the post-translational modification S-(dipyrrolylmethanemethyl)cysteine.

Belongs to the HMBS family. Monomer. The cofactor is dipyrromethane.

The catalysed reaction is 4 porphobilinogen + H2O = hydroxymethylbilane + 4 NH4(+). It participates in porphyrin-containing compound metabolism; protoporphyrin-IX biosynthesis; coproporphyrinogen-III from 5-aminolevulinate: step 2/4. In terms of biological role, tetrapolymerization of the monopyrrole PBG into the hydroxymethylbilane pre-uroporphyrinogen in several discrete steps. This Nitrosomonas europaea (strain ATCC 19718 / CIP 103999 / KCTC 2705 / NBRC 14298) protein is Porphobilinogen deaminase.